Consider the following 444-residue polypeptide: MHILVVSVNYRTAPVEFREKLTFQAAELERAMTTLQNQKSVLENVIVSTCNRTEIYAVVDQLHTGRYYIKKFLADWFQLEIEEVAPYLTIFEQDGAIDHLFRVTCGLDSMVVGETQILGQIKDSFLEAQQVKATGTIFNELFKQVITLAKRAHSETTIGESAMSVSYAAVELGKKIFGELTDCHVLILGAGKMGELALQNLYGSGARKVTVMNRTLSKAEIMAEKYMGHAKPLSELQCALLEADILISSTGASDYVITKEMMTKVEKMRSGRPLFMVDIAVPRDIDPAIDELEGSFLYDIDDLQGVVEANRAERLKEAEKIQFMIEEEIVLFKTWLSTLGVVPLISALRDKALAIQSETMESLERKIPNLSDRERKVISKHTKSIINQLLKDPILVAKEIAAEEGADEKLALFAKIFDLEMEDVESRAEEVEHKRVWTPSVPSL.

Residues 49–52, Ser-109, 114–116, and Gln-120 contribute to the substrate site; these read TCNR and ETQ. Residue Cys-50 is the Nucleophile of the active site. 189 to 194 is a binding site for NADP(+); the sequence is GAGKMG.

It belongs to the glutamyl-tRNA reductase family. Homodimer.

It catalyses the reaction (S)-4-amino-5-oxopentanoate + tRNA(Glu) + NADP(+) = L-glutamyl-tRNA(Glu) + NADPH + H(+). The protein operates within porphyrin-containing compound metabolism; protoporphyrin-IX biosynthesis; 5-aminolevulinate from L-glutamyl-tRNA(Glu): step 1/2. Its function is as follows. Catalyzes the NADPH-dependent reduction of glutamyl-tRNA(Glu) to glutamate 1-semialdehyde (GSA). The protein is Glutamyl-tRNA reductase of Bacillus anthracis (strain A0248).